The following is a 420-amino-acid chain: 4-hydroxy-3-methylbut-2-en-1-yl diphosphate synthase (flavodoxin) (420 aa).

The [4Fe-4S] cluster site is built by Cys307, Cys310, Cys353, and Glu360.

The protein belongs to the IspG family. Requires [4Fe-4S] cluster as cofactor.

The enzyme catalyses (2E)-4-hydroxy-3-methylbut-2-enyl diphosphate + oxidized [flavodoxin] + H2O + 2 H(+) = 2-C-methyl-D-erythritol 2,4-cyclic diphosphate + reduced [flavodoxin]. It functions in the pathway isoprenoid biosynthesis; isopentenyl diphosphate biosynthesis via DXP pathway; isopentenyl diphosphate from 1-deoxy-D-xylulose 5-phosphate: step 5/6. Functionally, converts 2C-methyl-D-erythritol 2,4-cyclodiphosphate (ME-2,4cPP) into 1-hydroxy-2-methyl-2-(E)-butenyl 4-diphosphate. The polypeptide is 4-hydroxy-3-methylbut-2-en-1-yl diphosphate synthase (flavodoxin) (Brucella suis biovar 1 (strain 1330)).